We begin with the raw amino-acid sequence, 215 residues long: Interleukin-12 subunit alpha (215 aa).

Residues 1-22 form the signal peptide; sequence MCQSRYLLFLATLVLLNHLTSA. 3 disulfide bridges follow: C33–C106, C60–C192, and C81–C119. N-linked (GlcNAc...) asparagine glycosylation is found at N35, N89, and N167.

It belongs to the IL-6 superfamily. In terms of assembly, heterodimer with IL12B; disulfide-linked. This heterodimer is known as interleukin IL-12. Heterodimer with EBI3/IL27B; not disulfide-linked. This heterodimer is known as interleukin IL-35. Interacts with NBR1; this interaction promotes IL-12 secretion.

It localises to the secreted. In terms of biological role, heterodimerizes with IL12B to form the IL-12 cytokine or with EBI3/IL27B to form the IL-35 cytokine. IL-12 is primarily produced by professional antigen-presenting cells (APCs) such as B-cells and dendritic cells (DCs) as well as macrophages and granulocytes and regulates T-cell and natural killer-cell responses, induces the production of interferon-gamma (IFN-gamma), favors the differentiation of T-helper 1 (Th1) cells and is an important link between innate resistance and adaptive immunity. Mechanistically, exerts its biological effects through a receptor composed of IL12R1 and IL12R2 subunits. Binding to the receptor results in the rapid tyrosine phosphorylation of a number of cellular substrates including the JAK family kinases TYK2 and JAK2. In turn, recruited STAT4 gets phosphorylated and translocates to the nucleus where it regulates cytokine/growth factor responsive genes. As part of IL-35, plays essential roles in maintaining the immune homeostasis of the liver microenvironment and also functions as an immune-suppressive cytokine. Mediates biological events through unconventional receptors composed of IL12RB2 and gp130/IL6ST heterodimers or homodimers. Signaling requires the transcription factors STAT1 and STAT4, which form a unique heterodimer that binds to distinct DNA sites. The sequence is that of Interleukin-12 subunit alpha (Il12a) from Rattus norvegicus (Rat).